The chain runs to 368 residues: Chaperone protein DnaJ (368 aa).

One can recognise a J domain in the interval 5-75 (DFYKILGVEK…TKRKQYDKFG (71 aa)). A CR-type zinc finger spans residues 139–222 (GKEISQKLTK…CRGKTIVETK (84 aa)). C152, C155, C169, C172, C196, C199, C210, and C213 together coordinate Zn(2+). CXXCXGXG motif repeat units lie at residues 152 to 159 (CDNCKGSG), 169 to 176 (CYNCQGRG), 196 to 203 (CSVCLGSG), and 210 to 217 (CKKCRGKT).

This sequence belongs to the DnaJ family. As to quaternary structure, homodimer. The cofactor is Zn(2+).

The protein resides in the cytoplasm. In terms of biological role, participates actively in the response to hyperosmotic and heat shock by preventing the aggregation of stress-denatured proteins and by disaggregating proteins, also in an autonomous, DnaK-independent fashion. Unfolded proteins bind initially to DnaJ; upon interaction with the DnaJ-bound protein, DnaK hydrolyzes its bound ATP, resulting in the formation of a stable complex. GrpE releases ADP from DnaK; ATP binding to DnaK triggers the release of the substrate protein, thus completing the reaction cycle. Several rounds of ATP-dependent interactions between DnaJ, DnaK and GrpE are required for fully efficient folding. Also involved, together with DnaK and GrpE, in the DNA replication of plasmids through activation of initiation proteins. This chain is Chaperone protein DnaJ, found in Mesomycoplasma hyopneumoniae (strain 232) (Mycoplasma hyopneumoniae).